The following is a 133-amino-acid chain: Probable mitochondrial pyruvate carrier 2 (133 aa).

The next 3 membrane-spanning stretches (helical) occupy residues 39 to 55 (VTNL…IVPI), 73 to 91 (ASSL…TLIS), and 99 to 116 (MLAA…YNIY).

The protein belongs to the mitochondrial pyruvate carrier (MPC) (TC 2.A.105) family.

It is found in the mitochondrion inner membrane. May mediate the uptake of pyruvate into mitochondria. This Dictyostelium discoideum (Social amoeba) protein is Probable mitochondrial pyruvate carrier 2.